We begin with the raw amino-acid sequence, 160 residues long: Phosphopantetheine adenylyltransferase (160 aa).

Threonine 10 provides a ligand contact to substrate. Residues 10 to 11 (TF) and histidine 18 contribute to the ATP site. The substrate site is built by lysine 42, leucine 74, and arginine 88. ATP-binding positions include 89–91 (GLR), glutamate 99, and 124–130 (NSFISST).

This sequence belongs to the bacterial CoaD family. In terms of assembly, homohexamer. Requires Mg(2+) as cofactor.

It localises to the cytoplasm. The enzyme catalyses (R)-4'-phosphopantetheine + ATP + H(+) = 3'-dephospho-CoA + diphosphate. Its pathway is cofactor biosynthesis; coenzyme A biosynthesis; CoA from (R)-pantothenate: step 4/5. Reversibly transfers an adenylyl group from ATP to 4'-phosphopantetheine, yielding dephospho-CoA (dPCoA) and pyrophosphate. In Photobacterium damsela subsp. piscicida (Pasteurella piscicida), this protein is Phosphopantetheine adenylyltransferase.